Reading from the N-terminus, the 86-residue chain is Large ribosomal subunit protein bL27c (86 aa).

Positions 1 to 27 are disordered; it reads MAHKKGSGSTRNGRDSNSKRLGVKKYG.

This sequence belongs to the bacterial ribosomal protein bL27 family.

The protein localises to the plastid. It is found in the chloroplast. The polypeptide is Large ribosomal subunit protein bL27c (Pyropia yezoensis (Susabi-nori)).